A 445-amino-acid chain; its full sequence is Squalene synthase (445 aa).

Helical transmembrane passes span 291 to 311 (STFT…DLVY) and 405 to 425 (LIVC…IAYV).

This sequence belongs to the phytoene/squalene synthase family. Mg(2+) is required as a cofactor.

It localises to the endoplasmic reticulum membrane. The catalysed reaction is 2 (2E,6E)-farnesyl diphosphate + NADPH + H(+) = squalene + 2 diphosphate + NADP(+). It catalyses the reaction 2 (2E,6E)-farnesyl diphosphate + NADH + H(+) = squalene + 2 diphosphate + NAD(+). It participates in terpene metabolism; lanosterol biosynthesis; lanosterol from farnesyl diphosphate: step 1/3. Its function is as follows. Catalyzes the condensation of 2 two farnesyl pyrophosphate moieties to form squalene. It is the first committed enzyme of the sterol biosynthesis pathway. Required for the biosynthesis of ergosterol. The protein is Squalene synthase (SQS1) of Yarrowia lipolytica (strain CLIB 122 / E 150) (Yeast).